We begin with the raw amino-acid sequence, 340 residues long: Ketol-acid reductoisomerase (NADP(+)) (340 aa).

The region spanning 3-182 (VEMLYEADVK…GSARVGLLVT (180 aa)) is the KARI N-terminal Rossmann domain. NADP(+) is bound by residues 26–29 (YGSQ), Arg49, Ser53, and 83–86 (DEIQ). His108 is an active-site residue. Gly134 is a binding site for NADP(+). The region spanning 183–328 (TFKEETEEDL…AELRKAMPFV (146 aa)) is the KARI C-terminal knotted domain. 4 residues coordinate Mg(2+): Asp191, Glu195, Glu227, and Glu231. Ser252 is a substrate binding site.

It belongs to the ketol-acid reductoisomerase family. It depends on Mg(2+) as a cofactor.

The enzyme catalyses (2R)-2,3-dihydroxy-3-methylbutanoate + NADP(+) = (2S)-2-acetolactate + NADPH + H(+). It carries out the reaction (2R,3R)-2,3-dihydroxy-3-methylpentanoate + NADP(+) = (S)-2-ethyl-2-hydroxy-3-oxobutanoate + NADPH + H(+). It participates in amino-acid biosynthesis; L-isoleucine biosynthesis; L-isoleucine from 2-oxobutanoate: step 2/4. Its pathway is amino-acid biosynthesis; L-valine biosynthesis; L-valine from pyruvate: step 2/4. Its function is as follows. Involved in the biosynthesis of branched-chain amino acids (BCAA). Catalyzes an alkyl-migration followed by a ketol-acid reduction of (S)-2-acetolactate (S2AL) to yield (R)-2,3-dihydroxy-isovalerate. In the isomerase reaction, S2AL is rearranged via a Mg-dependent methyl migration to produce 3-hydroxy-3-methyl-2-ketobutyrate (HMKB). In the reductase reaction, this 2-ketoacid undergoes a metal-dependent reduction by NADPH to yield (R)-2,3-dihydroxy-isovalerate. This chain is Ketol-acid reductoisomerase (NADP(+)), found in Streptococcus mutans serotype c (strain ATCC 700610 / UA159).